The following is a 469-amino-acid chain: L-seryl-tRNA(Sec) selenium transferase (469 aa).

The residue at position 298 (lysine 298) is an N6-(pyridoxal phosphate)lysine.

The protein belongs to the SelA family. Pyridoxal 5'-phosphate is required as a cofactor.

The protein localises to the cytoplasm. It catalyses the reaction L-seryl-tRNA(Sec) + selenophosphate + H(+) = L-selenocysteinyl-tRNA(Sec) + phosphate. The protein operates within aminoacyl-tRNA biosynthesis; selenocysteinyl-tRNA(Sec) biosynthesis; selenocysteinyl-tRNA(Sec) from L-seryl-tRNA(Sec) (bacterial route): step 1/1. Converts seryl-tRNA(Sec) to selenocysteinyl-tRNA(Sec) required for selenoprotein biosynthesis. The chain is L-seryl-tRNA(Sec) selenium transferase from Nitratidesulfovibrio vulgaris (strain ATCC 29579 / DSM 644 / CCUG 34227 / NCIMB 8303 / VKM B-1760 / Hildenborough) (Desulfovibrio vulgaris).